Consider the following 316-residue polypeptide: 4-hydroxy-3-methylbut-2-enyl diphosphate reductase (316 aa).

Residue cysteine 12 coordinates [4Fe-4S] cluster. (2E)-4-hydroxy-3-methylbut-2-enyl diphosphate-binding residues include histidine 41 and histidine 74. Positions 41 and 74 each coordinate dimethylallyl diphosphate. The isopentenyl diphosphate site is built by histidine 41 and histidine 74. [4Fe-4S] cluster is bound at residue cysteine 96. Residue histidine 124 participates in (2E)-4-hydroxy-3-methylbut-2-enyl diphosphate binding. Histidine 124 provides a ligand contact to dimethylallyl diphosphate. Residue histidine 124 coordinates isopentenyl diphosphate. The active-site Proton donor is the glutamate 126. Position 167 (threonine 167) interacts with (2E)-4-hydroxy-3-methylbut-2-enyl diphosphate. Cysteine 197 provides a ligand contact to [4Fe-4S] cluster. Residues serine 225, serine 226, asparagine 227, and serine 269 each coordinate (2E)-4-hydroxy-3-methylbut-2-enyl diphosphate. Positions 225, 226, 227, and 269 each coordinate dimethylallyl diphosphate. Positions 225, 226, 227, and 269 each coordinate isopentenyl diphosphate.

This sequence belongs to the IspH family. In terms of assembly, homodimer. It depends on [4Fe-4S] cluster as a cofactor.

It catalyses the reaction isopentenyl diphosphate + 2 oxidized [2Fe-2S]-[ferredoxin] + H2O = (2E)-4-hydroxy-3-methylbut-2-enyl diphosphate + 2 reduced [2Fe-2S]-[ferredoxin] + 2 H(+). It carries out the reaction dimethylallyl diphosphate + 2 oxidized [2Fe-2S]-[ferredoxin] + H2O = (2E)-4-hydroxy-3-methylbut-2-enyl diphosphate + 2 reduced [2Fe-2S]-[ferredoxin] + 2 H(+). The protein operates within isoprenoid biosynthesis; dimethylallyl diphosphate biosynthesis; dimethylallyl diphosphate from (2E)-4-hydroxy-3-methylbutenyl diphosphate: step 1/1. It functions in the pathway isoprenoid biosynthesis; isopentenyl diphosphate biosynthesis via DXP pathway; isopentenyl diphosphate from 1-deoxy-D-xylulose 5-phosphate: step 6/6. Catalyzes the conversion of 1-hydroxy-2-methyl-2-(E)-butenyl 4-diphosphate (HMBPP) into a mixture of isopentenyl diphosphate (IPP) and dimethylallyl diphosphate (DMAPP). Acts in the terminal step of the DOXP/MEP pathway for isoprenoid precursor biosynthesis. The sequence is that of 4-hydroxy-3-methylbut-2-enyl diphosphate reductase from Enterobacter sp. (strain 638).